The sequence spans 200 residues: Snake venom metalloproteinase rhomb-I (200 aa).

In terms of domain architecture, Peptidase M12B spans 4–200; it reads KYIELVVVAD…RKPQCILNKP (197 aa). Ca(2+) is bound by residues E7 and D91. 3 cysteine pairs are disulfide-bonded: C115–C195, C155–C179, and C157–C162. H140 contacts Zn(2+). Residue E141 is part of the active site. Residues H144 and H150 each contribute to the Zn(2+) site. Residues C195 and N198 each coordinate Ca(2+).

As to quaternary structure, monomer. Zn(2+) is required as a cofactor. In terms of tissue distribution, expressed by the venom gland.

It is found in the secreted. Snake venom zinc metalloproteinase that induces hemorrhage. The chain is Snake venom metalloproteinase rhomb-I from Lachesis muta rhombeata (Bushmaster).